The chain runs to 237 residues: Putative N-acetylmannosamine-6-phosphate 2-epimerase (237 aa).

Belongs to the NanE family.

The enzyme catalyses an N-acyl-D-glucosamine 6-phosphate = an N-acyl-D-mannosamine 6-phosphate. It participates in amino-sugar metabolism; N-acetylneuraminate degradation; D-fructose 6-phosphate from N-acetylneuraminate: step 3/5. In terms of biological role, converts N-acetylmannosamine-6-phosphate (ManNAc-6-P) to N-acetylglucosamine-6-phosphate (GlcNAc-6-P). The protein is Putative N-acetylmannosamine-6-phosphate 2-epimerase of Listeria monocytogenes serovar 1/2a (strain ATCC BAA-679 / EGD-e).